The following is a 138-amino-acid chain: Small ribosomal subunit protein uS11c (138 aa).

The tract at residues 1-23 (MAKAIPRRSSRRNGRIGSRKSAR) is disordered.

Belongs to the universal ribosomal protein uS11 family. In terms of assembly, part of the 30S ribosomal subunit.

The protein resides in the plastid. The protein localises to the chloroplast. The protein is Small ribosomal subunit protein uS11c of Ipomoea purpurea (Common morning glory).